Here is a 507-residue protein sequence, read N- to C-terminus: ATP synthase subunit alpha, chloroplastic (507 aa).

Residue 170 to 177 participates in ATP binding; it reads GDRQTGKT.

The protein belongs to the ATPase alpha/beta chains family. F-type ATPases have 2 components, CF(1) - the catalytic core - and CF(0) - the membrane proton channel. CF(1) has five subunits: alpha(3), beta(3), gamma(1), delta(1), epsilon(1). CF(0) has four main subunits: a, b, b' and c.

The protein resides in the plastid. It is found in the chloroplast thylakoid membrane. It carries out the reaction ATP + H2O + 4 H(+)(in) = ADP + phosphate + 5 H(+)(out). Produces ATP from ADP in the presence of a proton gradient across the membrane. The alpha chain is a regulatory subunit. This is ATP synthase subunit alpha, chloroplastic from Daucus carota (Wild carrot).